The sequence spans 68 residues: Large ribosomal subunit protein uL29 (68 aa).

It belongs to the universal ribosomal protein uL29 family.

The polypeptide is Large ribosomal subunit protein uL29 (Chloroflexus aggregans (strain MD-66 / DSM 9485)).